The sequence spans 202 residues: LexA repressor (202 aa).

Positions 32–52 (RAEVCSAFGFKSPNAAETHLR) form a DNA-binding region, H-T-H motif. Residues Ser-121 and Lys-158 each act as for autocatalytic cleavage activity in the active site.

Belongs to the peptidase S24 family. Homodimer.

It carries out the reaction Hydrolysis of Ala-|-Gly bond in repressor LexA.. Functionally, represses a number of genes involved in the response to DNA damage (SOS response), including recA and lexA. In the presence of single-stranded DNA, RecA interacts with LexA causing an autocatalytic cleavage which disrupts the DNA-binding part of LexA, leading to derepression of the SOS regulon and eventually DNA repair. The protein is LexA repressor of Azoarcus sp. (strain BH72).